The following is a 210-amino-acid chain: Vacuolar protein sorting-associated protein 2 homolog 3 (210 aa).

The segment at 1–23 is disordered; sequence MNIFTKKPNPREVLRESKREMTQ. Over residues 9–23 the composition is skewed to basic and acidic residues; that stretch reads NPREVLRESKREMTQ. Residues 28-84 are a coiled coil; it reads IEKEIGSLQSEEKKLVLEIKRTAKSGNEGATKILARQLIRLRQQIANLQGSRAQMRG. The tract at residues 178–200 is disordered; the sequence is LSSAPKGKIGGKKAEDVGSSGID.

This sequence belongs to the SNF7 family. Component of the endosomal sorting required for transport complex III (ESCRT-III), composed at least of VPS2, VPS20, VPS24 and VPS32.

It localises to the endosome. Its function is as follows. Component of the ESCRT-III complex, which is required for multivesicular bodies (MVBs) formation and sorting of endosomal cargo proteins into MVBs. The ESCRT-III complex is probably involved in the concentration of MVB cargo. This Arabidopsis thaliana (Mouse-ear cress) protein is Vacuolar protein sorting-associated protein 2 homolog 3 (VPS2.3).